We begin with the raw amino-acid sequence, 508 residues long: Cell division protein FtsZ (508 aa).

GTP-binding positions include glycine 24–asparagine 28, glycine 111–glycine 113, glutamate 142, arginine 146, and aspartate 190. 2 disordered regions span residues isoleucine 342–glutamine 389 and valine 428–asparagine 508. Over residues glutamine 464–glutamine 482 the composition is skewed to low complexity.

It belongs to the FtsZ family. As to quaternary structure, homodimer. Polymerizes to form a dynamic ring structure in a strictly GTP-dependent manner. Interacts directly with several other division proteins.

Its subcellular location is the cytoplasm. Essential cell division protein that forms a contractile ring structure (Z ring) at the future cell division site. The regulation of the ring assembly controls the timing and the location of cell division. One of the functions of the FtsZ ring is to recruit other cell division proteins to the septum to produce a new cell wall between the dividing cells. Binds GTP and shows GTPase activity. In Caulobacter vibrioides (strain ATCC 19089 / CIP 103742 / CB 15) (Caulobacter crescentus), this protein is Cell division protein FtsZ.